The chain runs to 199 residues: Glycerol-3-phosphate acyltransferase (199 aa).

The next 5 helical transmembrane spans lie at 3–23 (AAVWTLLLAYLFGSIPAGVLV), 50–70 (WGPALVVAFFDVFKGGIAVLV), 78–98 (DWMLGGVALMAVLGHNYSVFL), 113–133 (LLFLDPALALWTFPIGLSVIL), and 154–174 (LALGRPLWEVATVFLMALLIF).

This sequence belongs to the PlsY family. Probably interacts with PlsX.

Its subcellular location is the cell inner membrane. The catalysed reaction is an acyl phosphate + sn-glycerol 3-phosphate = a 1-acyl-sn-glycero-3-phosphate + phosphate. It functions in the pathway lipid metabolism; phospholipid metabolism. In terms of biological role, catalyzes the transfer of an acyl group from acyl-phosphate (acyl-PO(4)) to glycerol-3-phosphate (G3P) to form lysophosphatidic acid (LPA). This enzyme utilizes acyl-phosphate as fatty acyl donor, but not acyl-CoA or acyl-ACP. This Thermus thermophilus (strain ATCC BAA-163 / DSM 7039 / HB27) protein is Glycerol-3-phosphate acyltransferase.